Consider the following 299-residue polypeptide: 33 kDa chaperonin (299 aa).

Intrachain disulfides connect C234/C236 and C268/C271.

Belongs to the HSP33 family. In terms of processing, under oxidizing conditions two disulfide bonds are formed involving the reactive cysteines. Under reducing conditions zinc is bound to the reactive cysteines and the protein is inactive.

The protein resides in the cytoplasm. In terms of biological role, redox regulated molecular chaperone. Protects both thermally unfolding and oxidatively damaged proteins from irreversible aggregation. Plays an important role in the bacterial defense system toward oxidative stress. This Pseudomonas putida (strain GB-1) protein is 33 kDa chaperonin.